Consider the following 189-residue polypeptide: WASH complex subunit homolog 3 (189 aa).

The stretch at 35 to 74 forms a coiled coil; the sequence is MTEMLNNFGNKMEDILEKAEQSLDTADRKLRLMESKLAGM. Disordered regions lie at residues 76-101 and 150-189; these read LEDK…NPSS and SEGV…SDSD. Positions 150-165 are enriched in basic and acidic residues; that stretch reads SEGVDPSILKRGDEPS. The span at 167–189 shows a compositional bias: polar residues; sequence PQAQTSRNYESSGESTASFSDSD. Threonine 182 carries the phosphothreonine modification.

The protein belongs to the CCDC53 family. As to quaternary structure, probable component of the WASH complex. Component of the DHIC (ddl-1-containing hsf-1 inhibitory complex), which contains at least ddl-1, ddl-2, hsb-1 and hsf-1. Within the complex, interacts with ddl-2. Within the complex, interacts with hsb-1. Within the complex, interacts with hsf-1. Formation of the DHIC may be dependent upon the Insulin/IGF-1-like signaling (IIS) mediated pathway. Post-translationally, phosphorylated. Phosphorylation on Thr-182 may promote DHIC complex dissociation and consequently the activation of heat-shock transcription factor hsf-1. Phosphorylation is modulated by the Insulin/IGF-1-like signaling (IIS) mediated pathway. As to expression, expressed in pharynx, intestine, body wall muscles, vulva muscles, spermatheca, and several head and tail neurons.

Acts as a component of the WASH core complex that functions as a nucleation-promoting factor (NPF) at the surface of endosomes, where it recruits and activates the Arp2/3 complex to induce actin polymerization, playing a key role in the fission of tubules that serve as transport intermediates during endosome sorting. Acts as a component of the DHIC (ddl-1-containing hsf-1 inhibitory complex) which modulates lifespan by sequestering the heat-shock transcription factor hsf-1 to negatively regulate its binding to DNA and its transcriptional activity. The polypeptide is WASH complex subunit homolog 3 (ddl-1) (Caenorhabditis elegans).